Consider the following 233-residue polypeptide: MPLHRTRIKLCGLTQPADVDHAVAIGADAIGLVFYPPSPRYVAIERAAELAHRAGPFVTVTGLFVNASADDVARVLDQVPLTLLQFHGDEPAELCAEIAGKVGLPWLRALRVQPGADLVEFADRFATAQGLLLDAFVEGYGGGGHVFDWTLIPPQWLPQSPSLPTTSAAPRLVLSGGLSAQNVAGAIERVRPYAVDVSSGIEAARGVKDHARMTAFVRAVREADAALGASVQA.

It belongs to the TrpF family.

It catalyses the reaction N-(5-phospho-beta-D-ribosyl)anthranilate = 1-(2-carboxyphenylamino)-1-deoxy-D-ribulose 5-phosphate. It participates in amino-acid biosynthesis; L-tryptophan biosynthesis; L-tryptophan from chorismate: step 3/5. The chain is N-(5'-phosphoribosyl)anthranilate isomerase from Ralstonia pickettii (strain 12J).